The chain runs to 361 residues: UPF0283 membrane protein Smed_1530 (361 aa).

A disordered region spans residues 1–40 (MNDDSNGRRRRPAAFPVGTEDATSRELEQTPRRAPGSFSD). Residues 22-31 (ATSRELEQTP) are compositionally biased toward basic and acidic residues. 2 helical membrane passes run 76–96 (FGKI…GLWV) and 109–129 (WLGY…LIVV).

Belongs to the UPF0283 family.

Its subcellular location is the cell inner membrane. The sequence is that of UPF0283 membrane protein Smed_1530 from Sinorhizobium medicae (strain WSM419) (Ensifer medicae).